A 289-amino-acid polypeptide reads, in one-letter code: MSFKDRLFICSQYLLPHHLLSRLIGFAADCRATWFKDRLIAWFARRYQVDMREAQVEDLQAYEHFNAFFTRALKDGARPLAQEPGAVLCPADGAISQLGPIEHGRIFQAKGHSYSLAELLGGDAELAAPFMGGDFATVYLSPRDYHRVHMPLAGTLREMVYVPGRLFSVNQTTAENVPELFARNERVVCLFDTERGPMAVVLVGAMIVASIETVWAGLVTPPKRELKTFRYDEAARAPIRLEKGAELGRFKLGSTAIVLFGPQQVAFNDGLGAASPVRMGECLALPKQS.

Catalysis depends on charge relay system; for autoendoproteolytic cleavage activity residues Asp-92, His-149, and Ser-254. The active-site Schiff-base intermediate with substrate; via pyruvic acid; for decarboxylase activity is the Ser-254. Pyruvic acid (Ser); by autocatalysis is present on Ser-254.

It belongs to the phosphatidylserine decarboxylase family. PSD-B subfamily. Prokaryotic type I sub-subfamily. Heterodimer of a large membrane-associated beta subunit and a small pyruvoyl-containing alpha subunit. Requires pyruvate as cofactor. Is synthesized initially as an inactive proenzyme. Formation of the active enzyme involves a self-maturation process in which the active site pyruvoyl group is generated from an internal serine residue via an autocatalytic post-translational modification. Two non-identical subunits are generated from the proenzyme in this reaction, and the pyruvate is formed at the N-terminus of the alpha chain, which is derived from the carboxyl end of the proenzyme. The autoendoproteolytic cleavage occurs by a canonical serine protease mechanism, in which the side chain hydroxyl group of the serine supplies its oxygen atom to form the C-terminus of the beta chain, while the remainder of the serine residue undergoes an oxidative deamination to produce ammonia and the pyruvoyl prosthetic group on the alpha chain. During this reaction, the Ser that is part of the protease active site of the proenzyme becomes the pyruvoyl prosthetic group, which constitutes an essential element of the active site of the mature decarboxylase.

The protein resides in the cell membrane. The catalysed reaction is a 1,2-diacyl-sn-glycero-3-phospho-L-serine + H(+) = a 1,2-diacyl-sn-glycero-3-phosphoethanolamine + CO2. The protein operates within phospholipid metabolism; phosphatidylethanolamine biosynthesis; phosphatidylethanolamine from CDP-diacylglycerol: step 2/2. Functionally, catalyzes the formation of phosphatidylethanolamine (PtdEtn) from phosphatidylserine (PtdSer). This Pseudomonas aeruginosa (strain LESB58) protein is Phosphatidylserine decarboxylase proenzyme.